A 908-amino-acid chain; its full sequence is Flap endonuclease GEN homolog 1 (908 aa).

Positions 2 to 96 (GVNDLWQILE…SKRTQTRYGP (95 aa)) are XPG-N domain. 7 residues coordinate Mg(2+): D30, E75, E134, E136, D155, D157, and D208. Residues 122-208 (ECLGMPWVQA…VGLAVLLGCD (87 aa)) are XPG-I domain. The interval 208–383 (DYLPKGVPGV…LLVLLTRYDM (176 aa)) is 5'-3' exonuclease domain. The tract at residues 389-463 (GRKTSNQLQP…VYQKQLSETK (75 aa)) is chromodomain. Disordered stretches follow at residues 460–482 (SETKGRKQKSMKNKPKGSHLPEA), 629–650 (YESEQGTSDSEGSGRDLQQSNP), 792–834 (RDSS…NKLR), and 853–886 (AEDEENGFSDLGRSPQSFRPCHDKDENSTASWEN). The segment covering 465–476 (RKQKSMKNKPKG) has biased composition (basic residues). 2 positions are modified to phosphoserine: S794 and S795. Residues 824-834 (HVRDSTHNKLR) show a composition bias toward basic and acidic residues.

The protein belongs to the XPG/RAD2 endonuclease family. GEN subfamily. As to quaternary structure, largely monomeric, dimerizes on the Holliday junction and the first nick occurs upon dimerization at the junction. It depends on Mg(2+) as a cofactor. Expressed in bone marrow and testis and to a lesser extent in thymus, spleen, brain and colon.

The protein resides in the nucleus. Functionally, endonuclease which resolves Holliday junctions (HJs) by the introduction of symmetrically related cuts across the junction point, to produce nicked duplex products in which the nicks can be readily ligated. Four-way DNA intermediates, also known as Holliday junctions, are formed during homologous recombination and DNA repair, and their resolution is necessary for proper chromosome segregation. Cleaves HJs by a nick and counter-nick mechanism involving dual coordinated incisions that lead to the formation of ligatable nicked duplex products. Cleavage of the first strand is rate limiting, while second strand cleavage is rapid. Largely monomeric, dimerizes on the HJ and the first nick occurs upon dimerization at the junction. Efficiently cleaves both single and double HJs contained within large recombination intermediates. Exhibits a weak sequence preference for incision between two G residues that reside in a T-rich region of DNA. Also has endonuclease activity on 5'-flap and replication fork (RF) DNA substrates. This is Flap endonuclease GEN homolog 1 (Gen1) from Mus musculus (Mouse).